The primary structure comprises 231 residues: Ribonuclease HI (231 aa).

The 146-residue stretch at 1-146 (MRERAVAACD…ADRAASQAAV (146 aa)) folds into the RNase H type-1 domain. Positions 10, 50, 72, and 138 each coordinate Mg(2+). Low complexity-rich tracts occupy residues 148–157 (QEAAGSALGS) and 166–181 (VPAA…SGAA). Disordered regions lie at residues 148–192 (QEAA…SART) and 212–231 (PIAK…VAAG).

It belongs to the RNase H family. Monomer. Mg(2+) is required as a cofactor.

Its subcellular location is the cytoplasm. The catalysed reaction is Endonucleolytic cleavage to 5'-phosphomonoester.. Functionally, endonuclease that specifically degrades the RNA of RNA-DNA hybrids. The chain is Ribonuclease HI (rnhA) from Streptomyces coelicolor (strain ATCC BAA-471 / A3(2) / M145).